The sequence spans 732 residues: MSESAVPADIIMQPFAKLSEESLKLAVESLNELKIPNTTLASTTAEQQQQQQQQQQPPSSSTTKEGGATTTQDNKLTANGGTTADNNNNKPMVINKLDYLPIIKSNIWDESYGWLTTIPNSESFAQIIGTTIKEGKDIKKTLYILDPKQLKESFNLLGLDQQENSIDTNEMIYKIEEEMMMQGIFKILFKLDKKTLESFCRDLKIQIKDDMGALCDSIMSTMYDLEESPDTTTTAAATTTTTTTTAAVPPPPTTTTTTTTTTPTIASTPTVVPPTNTTTTTSTTSPIPSTTPLTNTTSIAAATTTTTTTPTDNSGTNSPNKETTPSKAKKGVPKKAPTKKQPATKSPTTETAGIVPTTTTTPPQATTTTTTTTPPTNIIAPKTNSTIISPPTEAPSKPAPKTSKSQATTTTTTTTVQSTTKNTEKSQNLTNTEQPKKKLRSSLDKPSSDKPLTPTLPGKRERKPLPLDPVHLQPEQKSKPGSGSAQSASTAKPTPTTTTTTTTTTKPKSTIAKTSTSTTIKSKPTTKKKETTKIITNGKRKRKQDNNNGNEEAAAEEQEEEEEEDNSNGIQNNNSSNDVEINSENESDREQNDNFSNFGSSNGNGNGLLSEDDDDDDDDDNNNNIMDYQSTASSEIKGYYTHDRKWICPSFDYIKKGIERGFLQNNFNLSDLLEYCKIHDLPKNKTKTKTIKIILDFVETGTAPQQTSKPKKLVGKAAAKKKLQDQQELASS.

Disordered stretches follow at residues 38-90 and 226-629; these read TTLA…NNNK and EESP…MDYQ. Low complexity predominate over residues 47–56; sequence QQQQQQQQQQ. The span at 57–76 shows a compositional bias: polar residues; sequence PPSSSTTKEGGATTTQDNKL. Composition is skewed to low complexity over residues 77–89, 231–247, and 254–318; these read TANG…NNNN, TTTT…TTAA, and TTTT…GTNS. Basic residues predominate over residues 327–338; the sequence is KAKKGVPKKAPT. Low complexity-rich tracts occupy residues 339–383, 401–421, and 487–523; these read KKQP…APKT, KTSK…STTK, and SAST…IKSK. Positions 553 to 566 are enriched in acidic residues; it reads AAAEEQEEEEEEDN. 2 stretches are compositionally biased toward low complexity: residues 567–577 and 593–609; these read SNGIQNNNSSN and DNFS…NGLL. Positions 610–621 are enriched in acidic residues; sequence SEDDDDDDDDDN.

This is an uncharacterized protein from Dictyostelium discoideum (Social amoeba).